We begin with the raw amino-acid sequence, 467 residues long: Cysteine--tRNA ligase (467 aa).

Cys-30 contacts Zn(2+). The 'HIGH' region signature appears at 32–42 (PTVYDDSHLGH). Zn(2+)-binding residues include Cys-209, His-239, and Glu-243. The short motif at 271-275 (KMSKS) is the 'KMSKS' region element. ATP is bound at residue Lys-274.

It belongs to the class-I aminoacyl-tRNA synthetase family. Monomer. Zn(2+) serves as cofactor.

It localises to the cytoplasm. It carries out the reaction tRNA(Cys) + L-cysteine + ATP = L-cysteinyl-tRNA(Cys) + AMP + diphosphate. The protein is Cysteine--tRNA ligase of Aliarcobacter butzleri (strain RM4018) (Arcobacter butzleri).